The primary structure comprises 200 residues: Probable GTP-binding protein EngB (200 aa).

Residues glutamate 24–isoleucine 198 form the EngB-type G domain. GTP is bound by residues glycine 32 to serine 39, glycine 59 to methionine 63, aspartate 77 to glycine 80, threonine 144 to aspartate 147, and phenylalanine 177 to alanine 179. Residues serine 39 and threonine 61 each coordinate Mg(2+).

Belongs to the TRAFAC class TrmE-Era-EngA-EngB-Septin-like GTPase superfamily. EngB GTPase family. Mg(2+) serves as cofactor.

Its function is as follows. Necessary for normal cell division and for the maintenance of normal septation. In Nitrosococcus oceani (strain ATCC 19707 / BCRC 17464 / JCM 30415 / NCIMB 11848 / C-107), this protein is Probable GTP-binding protein EngB.